A 46-amino-acid polypeptide reads, in one-letter code: Apamin (46 aa).

An N-terminal signal peptide occupies residues 1–27 (MISMLRCIYLFLSVILITSYFVTPVMP). 2 cysteine pairs are disulfide-bonded: Cys-28–Cys-38 and Cys-30–Cys-42. The essential for toxin activity stretch occupies residues 40–41 (RR). His-45 bears the Histidine amide mark.

Expressed by the venom gland.

The protein resides in the secreted. In terms of biological role, toxin with unique selectivity to KCa2 channels. Potently blocks human, rat and mouse KCa2.2/KCNN2/SK2 channels (IC(50)=27-140 pM), and moderately blocks human and rat KCa2.3/KCNN3/SK3 channels (IC(50)=0.6-4 nM), and human (IC(50)=0.7-12 nM) and mouse (IC(50)=28 nM) KCa2.1/KCNN1/SK1 channels. Does not show any antimicrobial activity. In vivo, intracerebroventricular injection into rats of a dose of 1 ng results in neurodegeneration specifically in the Purkinje cells of the cerebellum, and induces seizures characterized by hypersensitivity to noise, loss of postural control, paroxystic jerking, and alternating periods of great agitation with tonic-clonic convulsions and periods of total prostration. When administered at high doses, exerts anti-inflammatory, anti-oxidative, anti-fibrotic and anti-apoptotic properties in several models of inflammatory disease, including gouty arthritis, atherosclerosis, atopic dermatitis and acute kidney injury. Down-regulates pro-inflammatory signaling pathways, such as the NF-kappaB and STAT3 pathways, probably by blocking SK channels such as KCa2.2/KCNN2/SK2 and/or KCa2.3/KCNN3/SK3 which are thought to be involved in promoting some inflammatory responses. For example in mouse and rat microglia cells, inhibits LPS-activated KCa2.2/KCNN2/SK2 channels and TLR4 expression leading to the down-regulation of the NF-kappaB, STAT, and MAPK/ERK signaling pathways and, as a consequence, decreases secretion of pro-inflammatory cytokines. This Apis mellifera (Honeybee) protein is Apamin.